The sequence spans 146 residues: 3-hydroxyacyl-[acyl-carrier-protein] dehydratase FabZ (146 aa).

Histidine 49 is a catalytic residue.

This sequence belongs to the thioester dehydratase family. FabZ subfamily.

Its subcellular location is the cytoplasm. It carries out the reaction a (3R)-hydroxyacyl-[ACP] = a (2E)-enoyl-[ACP] + H2O. Involved in unsaturated fatty acids biosynthesis. Catalyzes the dehydration of short chain beta-hydroxyacyl-ACPs and long chain saturated and unsaturated beta-hydroxyacyl-ACPs. The polypeptide is 3-hydroxyacyl-[acyl-carrier-protein] dehydratase FabZ (Pseudomonas aeruginosa (strain LESB58)).